A 311-amino-acid chain; its full sequence is Thioredoxin reductase (311 aa).

35–42 (ERGIPGGQ) is an FAD binding site. An intrachain disulfide couples C134 to C137. Residue 277–286 (DVRDKGLRQI) participates in FAD binding.

The protein belongs to the class-II pyridine nucleotide-disulfide oxidoreductase family. Homodimer. FAD is required as a cofactor.

It localises to the cytoplasm. It catalyses the reaction [thioredoxin]-dithiol + NADP(+) = [thioredoxin]-disulfide + NADPH + H(+). The polypeptide is Thioredoxin reductase (trxB) (Staphylococcus aureus (strain MRSA252)).